A 704-amino-acid chain; its full sequence is Elongation factor G (704 aa).

The tr-type G domain maps to 10–290 (NKVRNIGIMA…AVVDFLPSPL (281 aa)). GTP contacts are provided by residues 19-26 (AHIDAGKT), 83-87 (DTPGH), and 137-140 (NKMD). The disordered stretch occupies residues 293 to 313 (PPMIGHDPRNEETEMTRKPST). Residues 298 to 313 (HDPRNEETEMTRKPST) are compositionally biased toward basic and acidic residues.

This sequence belongs to the TRAFAC class translation factor GTPase superfamily. Classic translation factor GTPase family. EF-G/EF-2 subfamily.

The protein resides in the cytoplasm. Catalyzes the GTP-dependent ribosomal translocation step during translation elongation. During this step, the ribosome changes from the pre-translocational (PRE) to the post-translocational (POST) state as the newly formed A-site-bound peptidyl-tRNA and P-site-bound deacylated tRNA move to the P and E sites, respectively. Catalyzes the coordinated movement of the two tRNA molecules, the mRNA and conformational changes in the ribosome. The chain is Elongation factor G from Renibacterium salmoninarum (strain ATCC 33209 / DSM 20767 / JCM 11484 / NBRC 15589 / NCIMB 2235).